Consider the following 403-residue polypeptide: PP2A regulatory subunit TAP46 (403 aa).

Disordered stretches follow at residues 158–184 and 351–403; these read ERRG…LDDD and ANSS…TPCG. Composition is skewed to acidic residues over residues 174-184 and 366-375; these read ETEEDDVLDDD and EDDEEDDDDA. Residues 376–391 are compositionally biased toward basic and acidic residues; the sequence is AQDKARAWDDWKDDNP.

It belongs to the IGBP1/TAP42 family.

In terms of biological role, involved in the regulation of the TOR signaling pathway. Seems to act as a regulator of PP2A catalytic activity. This Nicotiana tabacum (Common tobacco) protein is PP2A regulatory subunit TAP46.